Consider the following 122-residue polypeptide: MIQQESRLRVADNSGAKEILTIRVLGGSGRRYAGIGDIIVATVKDAIPGANVKKGEVVKAVIVRQKKEKRRADGSYIRFDENAAVLIKPSGEPRGTRIFGPVGRELRDKKYMKIISLAPEVL.

Belongs to the universal ribosomal protein uL14 family. As to quaternary structure, part of the 50S ribosomal subunit. Forms a cluster with proteins L3 and L19. In the 70S ribosome, L14 and L19 interact and together make contacts with the 16S rRNA in bridges B5 and B8.

Its function is as follows. Binds to 23S rRNA. Forms part of two intersubunit bridges in the 70S ribosome. In Saccharopolyspora erythraea (strain ATCC 11635 / DSM 40517 / JCM 4748 / NBRC 13426 / NCIMB 8594 / NRRL 2338), this protein is Large ribosomal subunit protein uL14.